Reading from the N-terminus, the 144-residue chain is MWLQNLLFLGTVVCSISAPTRSPTLVTRPSQHVDAIQEALSLLNNSNDVTAVMNKAVKVVSEVFDPEGPTCLETRLQLYKEGLQGSLTSLKNPLTMMANHYKQHCPPTPESPCATQNINFKSFKENLKDFLFNIPFDCWKPVKK.

The signal sequence occupies residues 1–17 (MWLQNLLFLGTVVCSIS). A glycan (O-linked (GalNAc...) serine) is linked at Ser-22. Residue Thr-27 is glycosylated (O-linked (GalNAc...) threonine). A glycan (N-linked (GlcNAc...) asparagine) is linked at Asn-44. 2 cysteine pairs are disulfide-bonded: Cys-71–Cys-113 and Cys-105–Cys-138.

The protein belongs to the GM-CSF family. As to quaternary structure, monomer. The signaling GM-CSF receptor complex is a dodecamer of two head-to-head hexamers of two alpha, two beta, and two ligand subunits.

The protein localises to the secreted. Its function is as follows. Cytokine that stimulates the growth and differentiation of hematopoietic precursor cells from various lineages, including granulocytes, macrophages, eosinophils and erythrocytes. In Canis lupus familiaris (Dog), this protein is Granulocyte-macrophage colony-stimulating factor (CSF2).